A 205-amino-acid polypeptide reads, in one-letter code: MSAKIGILAIQGDVAENVSSLVASIADLNQDATVHVVKTPEEISAMDGLVIPGGESTTIGQLSLVNGSQKVIKQKVESGMPVLGICAGMVLLASNATDRVVGKTEQPLFDFLDIELERNSFGRQRESFEANVSMDSIGISNYNGVFIRAPAISSTSDDIEVLAKLNEKIVAIKKGNIIGTSFHPELTDDLAVHKYFVNLVKETKQ.

An L-glutamine-binding site is contributed by 54–56; that stretch reads GES. The active-site Nucleophile is the C86. Residues R118 and 147-148 contribute to the L-glutamine site; that span reads IR. Active-site charge relay system residues include H183 and E185.

This sequence belongs to the glutaminase PdxT/SNO family. In terms of assembly, in the presence of PdxS, forms a dodecamer of heterodimers. Only shows activity in the heterodimer.

It catalyses the reaction aldehydo-D-ribose 5-phosphate + D-glyceraldehyde 3-phosphate + L-glutamine = pyridoxal 5'-phosphate + L-glutamate + phosphate + 3 H2O + H(+). It carries out the reaction L-glutamine + H2O = L-glutamate + NH4(+). It functions in the pathway cofactor biosynthesis; pyridoxal 5'-phosphate biosynthesis. In terms of biological role, catalyzes the hydrolysis of glutamine to glutamate and ammonia as part of the biosynthesis of pyridoxal 5'-phosphate. The resulting ammonia molecule is channeled to the active site of PdxS. This chain is Pyridoxal 5'-phosphate synthase subunit PdxT, found in Nitrosopumilus maritimus (strain SCM1).